The following is a 397-amino-acid chain: Succinate--CoA ligase [ADP-forming] subunit beta (397 aa).

In terms of domain architecture, ATP-grasp spans 9-254; it reads KALLRSYGAP…ETEEDPKELA (246 aa). ATP-binding positions include K46, 53–55, E109, S112, and E117; that span reads GRG. 2 residues coordinate Mg(2+): N209 and D223. Substrate is bound by residues N274 and 331–333; that span reads GIM.

It belongs to the succinate/malate CoA ligase beta subunit family. In terms of assembly, heterotetramer of two alpha and two beta subunits. Requires Mg(2+) as cofactor.

The catalysed reaction is succinate + ATP + CoA = succinyl-CoA + ADP + phosphate. It catalyses the reaction GTP + succinate + CoA = succinyl-CoA + GDP + phosphate. The protein operates within carbohydrate metabolism; tricarboxylic acid cycle; succinate from succinyl-CoA (ligase route): step 1/1. Succinyl-CoA synthetase functions in the citric acid cycle (TCA), coupling the hydrolysis of succinyl-CoA to the synthesis of either ATP or GTP and thus represents the only step of substrate-level phosphorylation in the TCA. The beta subunit provides nucleotide specificity of the enzyme and binds the substrate succinate, while the binding sites for coenzyme A and phosphate are found in the alpha subunit. This Cereibacter sphaeroides (strain ATCC 17029 / ATH 2.4.9) (Rhodobacter sphaeroides) protein is Succinate--CoA ligase [ADP-forming] subunit beta.